Reading from the N-terminus, the 1263-residue chain is DNA polymerase II large subunit (1263 aa).

Positions 1224-1250 (LENFNSSGNNGKKIEKKEKKAKEKPKK) are disordered. Residues 1235–1244 (KKIEKKEKKA) show a composition bias toward basic and acidic residues.

This sequence belongs to the archaeal DNA polymerase II family. Heterodimer of a large subunit and a small subunit.

It carries out the reaction DNA(n) + a 2'-deoxyribonucleoside 5'-triphosphate = DNA(n+1) + diphosphate. The enzyme catalyses Exonucleolytic cleavage in the 3'- to 5'-direction to yield nucleoside 5'-phosphates.. Its function is as follows. Possesses two activities: a DNA synthesis (polymerase) and an exonucleolytic activity that degrades single-stranded DNA in the 3'- to 5'-direction. Has a template-primer preference which is characteristic of a replicative DNA polymerase. This chain is DNA polymerase II large subunit (polC), found in Pyrococcus furiosus (strain ATCC 43587 / DSM 3638 / JCM 8422 / Vc1).